The primary structure comprises 138 residues: MYQQKYFEKPVYYLQRNDFDDNGNLIVPELRNKKVIIMIQANYCGHCTNAKGDYYKAAKYIKELEKNGGTSYKNKVVFATIQADGDEEGEKELNQILDKIKPTFVGFPDYVLYVNGKRIEDDGPPGRNFNNIVNYVMG.

A Thioredoxin domain is found at 3–138 (QQKYFEKPVY…FNNIVNYVMG (136 aa)). Catalysis depends on nucleophile residues cysteine 44 and cysteine 47. Cysteine 44 and cysteine 47 form a disulfide bridge.

The protein belongs to the thioredoxin family.

Its function is as follows. Participates in various redox reactions through the reversible oxidation of its active center dithiol to a disulfide and catalyzes dithiol-disulfide exchange reactions. This is Putative thioredoxin-like protein 453L from Acheta domesticus (House cricket).